Consider the following 365-residue polypeptide: Chorismate synthase (365 aa).

Arg46 is an NADP(+) binding site. FMN contacts are provided by residues 124–126, Gly284, 299–303, and Arg326; these read RAS and KPTPS.

Belongs to the chorismate synthase family. It depends on FMNH2 as a cofactor.

The catalysed reaction is 5-O-(1-carboxyvinyl)-3-phosphoshikimate = chorismate + phosphate. It functions in the pathway metabolic intermediate biosynthesis; chorismate biosynthesis; chorismate from D-erythrose 4-phosphate and phosphoenolpyruvate: step 7/7. Functionally, catalyzes the anti-1,4-elimination of the C-3 phosphate and the C-6 proR hydrogen from 5-enolpyruvylshikimate-3-phosphate (EPSP) to yield chorismate, which is the branch point compound that serves as the starting substrate for the three terminal pathways of aromatic amino acid biosynthesis. This reaction introduces a second double bond into the aromatic ring system. This chain is Chorismate synthase, found in Pyrobaculum neutrophilum (strain DSM 2338 / JCM 9278 / NBRC 100436 / V24Sta) (Thermoproteus neutrophilus).